Here is a 99-residue protein sequence, read N- to C-terminus: DNA-binding protein Fis (99 aa).

The H-T-H motif DNA-binding region spans 75–94 (QTRAATMLGINRGTLRKKLK).

It belongs to the transcriptional regulatory Fis family. As to quaternary structure, homodimer.

Its function is as follows. Activates ribosomal RNA transcription. Plays a direct role in upstream activation of rRNA promoters. This is DNA-binding protein Fis from Pasteurella multocida (strain Pm70).